The sequence spans 545 residues: Chaperonin GroEL (545 aa).

ATP is bound by residues 30–33 (TLGP), lysine 51, 87–91 (DGTTT), glycine 415, and aspartate 495.

Belongs to the chaperonin (HSP60) family. Forms a cylinder of 14 subunits composed of two heptameric rings stacked back-to-back. Interacts with the co-chaperonin GroES.

It localises to the cytoplasm. It carries out the reaction ATP + H2O + a folded polypeptide = ADP + phosphate + an unfolded polypeptide.. In terms of biological role, together with its co-chaperonin GroES, plays an essential role in assisting protein folding. The GroEL-GroES system forms a nano-cage that allows encapsulation of the non-native substrate proteins and provides a physical environment optimized to promote and accelerate protein folding. In Shewanella amazonensis (strain ATCC BAA-1098 / SB2B), this protein is Chaperonin GroEL.